The chain runs to 938 residues: AP-4 complex subunit epsilon (938 aa).

10 HEAT repeats span residues 118–153, 154–190, 192–227, 234–272, 321–358, 359–395, 397–431, 454–495, 517–556, and 562–601; these read DLII…INEE, TIPA…KSPS, VSHL…EDVN, SSFV…IMAL, KLLE…ISPD, IAEQ…SSNV, VIVD…QFAP, KVAH…EPKL, YSAS…FEIA, and DVLP…RAVE. Disordered stretches follow at residues 690–712, 725–867, 880–912, and 919–938; these read EPSY…RESS, WGRP…VMGL, VDSL…KEAL, and RQMG…DLLG. A compositionally biased stretch (polar residues) spans 694–706; the sequence is YSESHQPISTSLV. Over residues 728–744 the composition is skewed to low complexity; it reads PSYQSTTAASSTTPQAA. Positions 764-779 are enriched in basic and acidic residues; the sequence is SSYEPKKPEIDPEKQR. Over residues 808 to 821 the composition is skewed to polar residues; it reads ANKTATVPKENQTP. Composition is skewed to low complexity over residues 853–863 and 880–891; these read DSSSQDGGSSD and VDSLLSELSDSS. An HEAT 11 repeat occupies 874–911; the sequence is VTTTTSVDSLLSELSDSSKGNSRTYQPQTSKGPNTKEA. The segment covering 892 to 906 has biased composition (polar residues); the sequence is KGNSRTYQPQTSKGP.

Belongs to the adaptor complexes large subunit family. As to quaternary structure, adaptor protein complex 4 (AP-4) is a heterotetramer composed of two large adaptins (epsilon-type subunit and beta-type subunit), a medium adaptin (mu-type subunit) and a small adaptin (sigma-type subunit).

The protein resides in the golgi apparatus. It localises to the trans-Golgi network. It is found in the membrane. Its subcellular location is the coated pit. Subunit of novel type of clathrin- or non-clathrin-associated protein coat involved in targeting proteins from the trans-Golgi network (TGN) to the endosomal-lysosomal system. This chain is AP-4 complex subunit epsilon, found in Arabidopsis thaliana (Mouse-ear cress).